A 716-amino-acid polypeptide reads, in one-letter code: Polyribonucleotide nucleotidyltransferase (716 aa).

Residues Asp-486 and Asp-492 each coordinate Mg(2+). The 60-residue stretch at 553-612 folds into the KH domain; it reads PHIYNIKINPEKIKDVIGKGGAVIRALSDETDTKIDISDDGNITIAALSQKSAAFAQQRI. An S1 motif domain is found at 622 to 690; sequence GRIYQGTVTR…RQGRIRLSIK (69 aa).

It belongs to the polyribonucleotide nucleotidyltransferase family. Component of the RNA degradosome, which is a multiprotein complex involved in RNA processing and mRNA degradation. The cofactor is Mg(2+).

It localises to the cytoplasm. The catalysed reaction is RNA(n+1) + phosphate = RNA(n) + a ribonucleoside 5'-diphosphate. Functionally, involved in mRNA degradation. Catalyzes the phosphorolysis of single-stranded polyribonucleotides processively in the 3'- to 5'-direction. This is Polyribonucleotide nucleotidyltransferase from Hamiltonella defensa subsp. Acyrthosiphon pisum (strain 5AT).